A 396-amino-acid polypeptide reads, in one-letter code: Ribosomal RNA large subunit methyltransferase I (396 aa).

Residues A2–F79 form the PUA domain.

It belongs to the methyltransferase superfamily. RlmI family.

Its subcellular location is the cytoplasm. It catalyses the reaction cytidine(1962) in 23S rRNA + S-adenosyl-L-methionine = 5-methylcytidine(1962) in 23S rRNA + S-adenosyl-L-homocysteine + H(+). Specifically methylates the cytosine at position 1962 (m5C1962) of 23S rRNA. The sequence is that of Ribosomal RNA large subunit methyltransferase I from Shewanella sp. (strain MR-4).